We begin with the raw amino-acid sequence, 340 residues long: Aliphatic sulfonates import ATP-binding protein SsuB 1 (340 aa).

A disordered region spans residues Thr44 to Gly72. The ABC transporter domain occupies Val80 to Leu299. Gly112–Ser119 serves as a coordination point for ATP.

This sequence belongs to the ABC transporter superfamily. Aliphatic sulfonates importer (TC 3.A.1.17.2) family. The complex is composed of two ATP-binding proteins (SsuB), two transmembrane proteins (SsuC) and a solute-binding protein (SsuA).

The protein localises to the cell inner membrane. The enzyme catalyses ATP + H2O + aliphatic sulfonate-[sulfonate-binding protein]Side 1 = ADP + phosphate + aliphatic sulfonateSide 2 + [sulfonate-binding protein]Side 1.. Part of the ABC transporter complex SsuABC involved in aliphatic sulfonates import. Responsible for energy coupling to the transport system. In Paraburkholderia xenovorans (strain LB400), this protein is Aliphatic sulfonates import ATP-binding protein SsuB 1.